A 492-amino-acid polypeptide reads, in one-letter code: Putative protein disulfide-isomerase C1F5.02 (492 aa).

Residues 1–22 form the signal peptide; sequence MKISNLLAAFLAFSGGFFCASA. In terms of domain architecture, Thioredoxin 1 spans 23 to 128; that stretch reads EVPKVNKEGL…LVKYMRKQLL (106 aa). Catalysis depends on nucleophile residues cysteine 51 and cysteine 54. Cysteine 51 and cysteine 54 are oxidised to a cystine. Residues asparagine 161 and asparagine 257 are each glycosylated (N-linked (GlcNAc...) asparagine). In terms of domain architecture, Thioredoxin 2 spans 323 to 462; that stretch reads ELTAKAMTKF…LSAFIDKHAS (140 aa). Residues cysteine 385 and cysteine 388 each act as nucleophile in the active site. A disulfide bridge links cysteine 385 with cysteine 388. The segment at 468-492 is disordered; the sequence is KEKESVPAPDLEDQVAVEDEMADEL. The segment covering 477–492 has biased composition (acidic residues); that stretch reads DLEDQVAVEDEMADEL. The Prevents secretion from ER motif lies at 489–492; sequence ADEL.

The protein belongs to the protein disulfide isomerase family.

It is found in the endoplasmic reticulum lumen. The enzyme catalyses Catalyzes the rearrangement of -S-S- bonds in proteins.. Functionally, participates in the folding of proteins containing disulfide bonds, may be involved in glycosylation, prolyl hydroxylation and triglyceride transfer. The sequence is that of Putative protein disulfide-isomerase C1F5.02 from Schizosaccharomyces pombe (strain 972 / ATCC 24843) (Fission yeast).